Consider the following 466-residue polypeptide: MSVVPVVDVLQGRMPADSEITVQGWVRTRRDSKAGISFLAVYDGSCFDPLQAVINNTLPNYQNDILRLTSGCSVSVTGRVVESLGGGQRYEIQAQAIEVLGWVDDPDTYPMAAKRHSVEYLREVAHLRPRTNLIGAVARVRHTLAQAIHRFMDEQGFFWVSTPLITASDTEGAGEMFRVSTLDLENLPRTPDGKVNYDEDFFGKEAFLTVSGQLNGESYACALSKIYTFGPTFRAENSNTSRHLAEFWMAEPEVAFATLDDAAGLAEAMLKYVFQAVLTERADDMQFFAERIDKEAINRLKQFISADFAQVDYTKAVEILQNCGQTFENPVSWGIDLSSEHERYLAEKHFKAPVVVKNYPKDIKAFYMRMNDDGKTVAAMDVLAPGIGEIIGGSQREERLDRLDQRLAEMGLNKDDYWWYRDLRRYGTVPHSGFGLGFERLIVYVTGMQNIRDVIPFPRSPRNANF.

This sequence belongs to the class-II aminoacyl-tRNA synthetase family. In terms of assembly, homodimer.

The protein localises to the cytoplasm. It catalyses the reaction tRNA(Asn) + L-asparagine + ATP = L-asparaginyl-tRNA(Asn) + AMP + diphosphate + H(+). This chain is Asparagine--tRNA ligase, found in Sodalis glossinidius (strain morsitans).